The sequence spans 908 residues: DNA (cytosine-5)-methyltransferase 3A (908 aa).

Over residues Met-1–Ser-13 the composition is skewed to polar residues. 2 disordered regions span residues Met-1–Arg-183 and Ser-226–Glu-281. Over residues Leu-14–Glu-37 the composition is skewed to basic and acidic residues. Basic residues predominate over residues Lys-44–His-54. Over residues Thr-69 to Gly-80 the composition is skewed to polar residues. Ser-102 is modified (phosphoserine). The segment covering Gly-110–Ala-124 has biased composition (low complexity). Position 120 is a phosphothreonine (Thr-120). A Glycyl lysine isopeptide (Lys-Gly) (interchain with G-Cter in SUMO2) cross-link involves residue Lys-158. Arg-167 is modified (omega-N-methylarginine). The tract at residues Ser-195–Asn-399 is interaction with DNMT1 and DNMT3B. Phosphoserine is present on residues Ser-239 and Ser-251. The span at Ala-242–Thr-256 shows a compositional bias: polar residues. At Thr-257 the chain carries Phosphothreonine. One can recognise a PWWP domain in the interval Thr-257–Ser-315. The segment covering Ala-265–Asp-275 has biased composition (basic and acidic residues). Phosphoserine is present on residues Ser-386 and Ser-389. A disordered region spans residues Ala-443–Lys-462. Residues Glu-478 to Asp-610 enclose the ADD domain. The GATA-type; atypical zinc-finger motif lies at Ile-489–Glu-519. The segment at Cys-490–Cys-582 is interaction with the PRC2/EED-EZH2 complex. A PHD-type; atypical zinc finger spans residues Gln-530–Gly-586. The SAM-dependent MTase C5-type domain maps to Ile-630–Val-908. S-adenosyl-L-methionine contacts are provided by residues Asp-637–Thr-641, Glu-660, and Asp-682–Arg-684. Cys-706 is a catalytic residue. An S-methylcysteine; by autocatalysis modification is found at Cys-706. Arg-887–Trp-889 contributes to the S-adenosyl-L-methionine binding site.

Belongs to the class I-like SAM-binding methyltransferase superfamily. C5-methyltransferase family. In terms of assembly, heterotetramer composed of 1 DNMT3A homodimer and 2 DNMT3L subunits (DNMT3L-DNMT3A-DNMT3A-DNMT3L). Interacts with DNMT1 and DNMT3B. Interacts with MPHOSPH8. Interacts with histone H3 that is not methylated at 'Lys-4' (H3K4). Binds the ZBTB18 transcriptional repressor. Interacts with SETDB1. Associates with HDAC1 through its ADD domain. Interacts with UHRF1. Interacts with the PRC2/EED-EZH2 complex. Interacts with UBC9, PIAS1 and PIAS2. Interacts with SPOCD1. Interacts with ZNF263; recruited to the SIX3 promoter along with other proteins involved in chromatin modification and transcriptional corepression where it contributes to transcriptional repression. Post-translationally, sumoylated; sumoylation disrupts the ability to interact with histone deacetylases (HDAC1 and HDAC2) and repress transcription. Auto-methylated at Cys-706: auto-methylation takes place in absence of DNA substrate and inactivates the DNA methyltransferase activity. Inactivation by auto-methylation may be used to inactivate unused DNA methyltransferases in the cell.

It is found in the nucleus. The protein resides in the chromosome. Its subcellular location is the cytoplasm. The catalysed reaction is a 2'-deoxycytidine in DNA + S-adenosyl-L-methionine = a 5-methyl-2'-deoxycytidine in DNA + S-adenosyl-L-homocysteine + H(+). It catalyses the reaction L-cysteinyl-[protein] + S-adenosyl-L-methionine = S-methyl-L-cysteinyl-[protein] + S-adenosyl-L-homocysteine + H(+). With respect to regulation, activated by binding to the regulatory factor DNMT3L. Auto-methylation at Cys-706 in absence of DNA inactivates the DNA methyltransferase activity. Functionally, required for genome-wide de novo methylation and is essential for the establishment of DNA methylation patterns during development. DNA methylation is coordinated with methylation of histones. It modifies DNA in a non-processive manner and also methylates non-CpG sites. May preferentially methylate DNA linker between 2 nucleosomal cores and is inhibited by histone H1. Plays a role in paternal and maternal imprinting. Required for methylation of most imprinted loci in germ cells. Acts as a transcriptional corepressor for ZBTB18. Recruited to trimethylated 'Lys-36' of histone H3 (H3K36me3) sites. Can actively repress transcription through the recruitment of HDAC activity. Also has weak auto-methylation activity on Cys-706 in absence of DNA. This Rattus norvegicus (Rat) protein is DNA (cytosine-5)-methyltransferase 3A (Dnmt3a).